Here is a 430-residue protein sequence, read N- to C-terminus: Serine--tRNA ligase (430 aa).

237–239 (TAE) lines the L-serine pocket. Residue 268-270 (RSE) coordinates ATP. Glutamate 291 contacts L-serine. Residue 355–358 (EISS) coordinates ATP. Serine 391 contributes to the L-serine binding site.

Belongs to the class-II aminoacyl-tRNA synthetase family. Type-1 seryl-tRNA synthetase subfamily. Homodimer. The tRNA molecule binds across the dimer.

It localises to the cytoplasm. It catalyses the reaction tRNA(Ser) + L-serine + ATP = L-seryl-tRNA(Ser) + AMP + diphosphate + H(+). It carries out the reaction tRNA(Sec) + L-serine + ATP = L-seryl-tRNA(Sec) + AMP + diphosphate + H(+). It participates in aminoacyl-tRNA biosynthesis; selenocysteinyl-tRNA(Sec) biosynthesis; L-seryl-tRNA(Sec) from L-serine and tRNA(Sec): step 1/1. Its function is as follows. Catalyzes the attachment of serine to tRNA(Ser). Is also able to aminoacylate tRNA(Sec) with serine, to form the misacylated tRNA L-seryl-tRNA(Sec), which will be further converted into selenocysteinyl-tRNA(Sec). The chain is Serine--tRNA ligase from Cronobacter sakazakii (strain ATCC BAA-894) (Enterobacter sakazakii).